The following is a 197-amino-acid chain: Nucleoid occlusion factor SlmA (197 aa).

The region spanning 7 to 67 is the HTH tetR-type domain; sequence INRREHILQC…GLIEFIEESL (61 aa). Positions 30 to 49 form a DNA-binding region, H-T-H motif; it reads TTAKLAAEVGVSEAALYRHF. Residues 109–136 are a coiled coil; sequence DALLGENERLRSRISQLFSKIETHLKQI.

Belongs to the nucleoid occlusion factor SlmA family. As to quaternary structure, homodimer. Interacts with FtsZ.

The protein resides in the cytoplasm. It is found in the nucleoid. Its function is as follows. Required for nucleoid occlusion (NO) phenomenon, which prevents Z-ring formation and cell division over the nucleoid. Acts as a DNA-associated cell division inhibitor that binds simultaneously chromosomal DNA and FtsZ, and disrupts the assembly of FtsZ polymers. SlmA-DNA-binding sequences (SBS) are dispersed on non-Ter regions of the chromosome, preventing FtsZ polymerization at these regions. The sequence is that of Nucleoid occlusion factor SlmA from Shewanella pealeana (strain ATCC 700345 / ANG-SQ1).